A 157-amino-acid chain; its full sequence is SsrA-binding protein (157 aa).

The segment at 130–157 is disordered; that stretch reads HDKRQDMAKKDSQRRIQKELGQRQKGME. Residues 132–157 show a composition bias toward basic and acidic residues; the sequence is KRQDMAKKDSQRRIQKELGQRQKGME.

This sequence belongs to the SmpB family.

The protein localises to the cytoplasm. Functionally, required for rescue of stalled ribosomes mediated by trans-translation. Binds to transfer-messenger RNA (tmRNA), required for stable association of tmRNA with ribosomes. tmRNA and SmpB together mimic tRNA shape, replacing the anticodon stem-loop with SmpB. tmRNA is encoded by the ssrA gene; the 2 termini fold to resemble tRNA(Ala) and it encodes a 'tag peptide', a short internal open reading frame. During trans-translation Ala-aminoacylated tmRNA acts like a tRNA, entering the A-site of stalled ribosomes, displacing the stalled mRNA. The ribosome then switches to translate the ORF on the tmRNA; the nascent peptide is terminated with the 'tag peptide' encoded by the tmRNA and targeted for degradation. The ribosome is freed to recommence translation, which seems to be the essential function of trans-translation. The sequence is that of SsrA-binding protein from Alkaliphilus metalliredigens (strain QYMF).